Here is an 86-residue protein sequence, read N- to C-terminus: Large ribosomal subunit protein uL23 (86 aa).

The protein belongs to the universal ribosomal protein uL23 family. Part of the 50S ribosomal subunit. Contacts protein L29.

In terms of biological role, binds to 23S rRNA. One of the proteins that surrounds the polypeptide exit tunnel on the outside of the ribosome. The chain is Large ribosomal subunit protein uL23 from Pyrococcus abyssi (strain GE5 / Orsay).